The primary structure comprises 88 residues: Small ribosomal subunit protein uS17 (88 aa).

Belongs to the universal ribosomal protein uS17 family. As to quaternary structure, part of the 30S ribosomal subunit.

One of the primary rRNA binding proteins, it binds specifically to the 5'-end of 16S ribosomal RNA. The sequence is that of Small ribosomal subunit protein uS17 from Marinobacter nauticus (strain ATCC 700491 / DSM 11845 / VT8) (Marinobacter aquaeolei).